The following is a 267-amino-acid chain: Octanoyltransferase (267 aa).

A disordered region spans residues 1 to 30 (MPTGKLRQKPPYAAIMTNSPVTPSTETQQP). Residues 16–28 (MTNSPVTPSTETQ) are compositionally biased toward polar residues. Residues 77 to 265 (GTASELVWLV…AFESVFGPRQ (189 aa)) form the BPL/LPL catalytic domain. Substrate-binding positions include 116-123 (RGGEYTYH), 196-198 (AIG), and 209-211 (GIA). C227 functions as the Acyl-thioester intermediate in the catalytic mechanism.

The protein belongs to the LipB family.

The protein resides in the cytoplasm. The enzyme catalyses octanoyl-[ACP] + L-lysyl-[protein] = N(6)-octanoyl-L-lysyl-[protein] + holo-[ACP] + H(+). The protein operates within protein modification; protein lipoylation via endogenous pathway; protein N(6)-(lipoyl)lysine from octanoyl-[acyl-carrier-protein]: step 1/2. Catalyzes the transfer of endogenously produced octanoic acid from octanoyl-acyl-carrier-protein onto the lipoyl domains of lipoate-dependent enzymes. Lipoyl-ACP can also act as a substrate although octanoyl-ACP is likely to be the physiological substrate. This chain is Octanoyltransferase, found in Brucella abortus biovar 1 (strain 9-941).